Reading from the N-terminus, the 1160-residue chain is ATP-dependent RNA helicase dhx8 (1160 aa).

2 disordered regions span residues 75–140 and 153–192; these read TTTT…SIPN and PIDD…QNKR. Low complexity-rich tracts occupy residues 76-110 and 122-132; these read TTTT…NNNN and NSNSNNQKKNQ. A compositionally biased stretch (basic and acidic residues) spans 155–192; sequence DDEKTKEELKRKQQDMDREFEREQREKRDRDREQQNKR. An S1 motif domain is found at 202 to 274; the sequence is YKIYDGKVSS…ASSKISLSMK (73 aa). Low complexity predominate over residues 294–320; the sequence is ISTNSTNNRSNPFKPNNNNNNSSNNNN. 2 disordered regions span residues 294–334 and 409–438; these read ISTN…KNRK and KPNG…QRNE. A compositionally biased stretch (polar residues) spans 412 to 424; the sequence is GSLQRAASTQTAL. Residues 425–438 are compositionally biased toward basic and acidic residues; that stretch reads SKERKEEKNQQRNE. The Helicase ATP-binding domain occupies 518–681; sequence LQAVSEHQLL…FMNAQLFIIP (164 aa). 531–538 lines the ATP pocket; it reads GETGSGKT. The short motif at 628 to 631 is the DEAH box element; sequence DEAH. The Helicase C-terminal domain occupies 699–879; the sequence is YLDASLITVM…NTVLTMKAMG (181 aa).

It belongs to the DEAD box helicase family. DEAH subfamily. DDX8/PRP22 sub-subfamily. As to quaternary structure, identified in the spliceosome complex.

The protein resides in the nucleus. The catalysed reaction is ATP + H2O = ADP + phosphate + H(+). Facilitates nuclear export of spliced mRNA by releasing the RNA from the spliceosome. This Dictyostelium discoideum (Social amoeba) protein is ATP-dependent RNA helicase dhx8 (dhx8).